Reading from the N-terminus, the 1340-residue chain is MNRTTPDQELAPASEPVWERPWSVEEIRRSSQSWSLAADAGLLQFLQEFSQQTISRTHEIKKQVDGLIRETKATDCRLHNVFNDFLMLSNTQFIENRVYDEEVEEPVLKAEAEKTEQEKTREQKEVDLIPKVQEAVNYGLQVLDSAFEQLDIKAGNSDSEEDDANGRVELILEPKDLYIDRPLPYLIGSKLFMEQEDVGLGELSSEEGSVGSDRGSIVDTEEEKEEEESDEDFAHHSDNDQNRNTTQMSDEEEDDDGCDLFADSEKEEEDIEDIEEITRPKRNGPTSFADELAARIKGDAVGRVDEEPTTLSSGEAKPRKTLKEKKERRTPSDDEEDNLFAPPKLTDEDFSPFGSGGGLFSGGKGLFDDEDEESDLFTEAPQDRQAGASVKEESSSSKPGKKIPAGAVSVFLGDTDVFGAASVPSLKEPQKPEQPTPRKSPYFPPPTGLFDDDDGDDDDDFFSTPHSKPSKTGKVQSTADIFGDDEGDLFKEKAVTLPEATVSQTDENKARAEKKVSLPSSKNLKPSSETKTQKGLFSDEEDSEDLFSSQSASKLKGAPLLPGKLPTSVSLFEDEDEEDNLFGGTAAKRQTLSLQAQGEEKAKASELSKKKASALLFSSDEEDQWNIPASQTHSASDSRSKGESRDSGTLQSQEAKAVKKASLFEEDEEDDLFAIAKDSQKKTQRVSLLFEDDVDSGGSLFGSPPTSVPPATTKKETVSEAPPLLFSDEEEKEAQLGVKPVDKKVESAKESLKFGRTDVAESEKEGLLTRSAQEAVKHSDLFSSSSPLDKGTKPRTKTVLSLFDEEEDKMEDQNTIQAPQKEVGKGRDPDARPKSTGVFQDEELLFSHKLQKDNDPDVDLFAGTKKTKLLEPSVGSLFGDDEDDDLFSSAKSQPLVQEKKRVVKKDYSVDSVKNQKHPETIQGIKEKGIWKPETPQDSSGLAPFKTKEPSTRIGKIQANLAINPAALLPTAASQISEVKPVLPELAFPSSEHRRSHGLESVPVLPGSGEAGVSFDLPAQADTLHSANKSRVKMRGKRRPQTRAARRLAAQESSEAEDMSVPRGPIAQWADGTISPNGHRPQLRAASGEDSTEEALAAAAAPWEGGPVPGVDRSPFAKSLGHSRGEADLFDSGDIFSTGTGSQSEERTKPKAKIAENLANPPVGGKAKSPMFPALGEASSDDDLFQSAKPKPAKKTNPFPLLEDEDDLFTDQKVKKNETKSDSQQDVISTTQDIFEDDIFATEAIKPSQKTREKEKTLESNLFDDNIDIFADLTVKPKEKSKKKVEAKSIFDDDMDDIFSSGIQAKTAKPKSRSAQAAPEPRFEHKVSNIFDDPLNAFGGQ.

The interval 1 to 219 (MNRTTPDQEL…VGSDRGSIVD (219 aa)) is sufficient for interaction with WASHC3, WASHC4 and WASHC5; required for interaction with WASHC1. 5 positions are modified to phosphoserine: S157, S159, S204, S205, and S209. The span at 201 to 213 (GELSSEEGSVGSD) shows a compositional bias: low complexity. Positions 201–404 (GELSSEEGSV…SSSKPGKKIP (204 aa)) are disordered. Positions 219-231 (DTEEEKEEEESDE) are enriched in acidic residues. Positions 232–241 (DFAHHSDNDQ) are enriched in basic and acidic residues. 2 stretches are compositionally biased toward acidic residues: residues 249–258 (SDEEEDDDGC) and 265–275 (EKEEEDIEDIE). Phosphoserine is present on S287. Positions 292-306 (LAARIKGDAVGRVDE) are enriched in basic and acidic residues. At T330 the chain carries Phosphothreonine. The span at 354–365 (GSGGGLFSGGKG) shows a compositional bias: gly residues. Residues 355–599 (SGGGLFSGGK…QTLSLQAQGE (245 aa)) are sufficient for interaction with CCDC93. The interaction with VPS35 stretch occupies residues 356-1340 (GGGLFSGGKG…DDPLNAFGGQ (985 aa)). The LFa 1 motif lies at 366–377 (LFDDEDEESDLF). Residues S394 and S396 each carry the phosphoserine modification. 3 consecutive short sequence motifs (LFa) follow at residues 410–418 (VFLGDTDVF), 449–462 (LFDDDDGDDDDDFF), and 481–490 (IFGDDEGDLF). 3 disordered regions span residues 421–586 (ASVP…GGTA), 618–663 (SSDE…KASL), and 695–838 (DSGG…STGV). Residues 450–461 (FDDDDGDDDDDF) show a composition bias toward acidic residues. Basic and acidic residues predominate over residues 506 to 516 (DENKARAEKKV). Positions 517–527 (SLPSSKNLKPS) are enriched in low complexity. 3 short sequence motifs (LFa) span residues 536–547 (LFSDEEDSEDLF), 571–582 (LFEDEDEEDNLF), and 616–628 (LFSSDEEDQWNIP). A phosphoserine mark is found at S538 and S543. A compositionally biased stretch (low complexity) spans 546–566 (LFSSQSASKLKGAPLLPGKLP). A phosphoserine mark is found at S618 and S619. Basic and acidic residues predominate over residues 636-646 (SDSRSKGESRD). 3 consecutive short sequence motifs (LFa) follow at residues 663 to 673 (LFEEDEEDDLF), 689 to 701 (LFEDDVDSGGSLF), and 725 to 737 (LFSDEEEKEAQLG). 4 positions are modified to phosphoserine: S727, S751, S786, and S801. Positions 740 to 767 (PVDKKVESAKESLKFGRTDVAESEKEGL) are enriched in basic and acidic residues. Residues 802-816 (LFDEEEDKMEDQNTI) carry the LFa 11 motif. Residues 822 to 833 (EVGKGRDPDARP) show a composition bias toward basic and acidic residues. Short sequence motifs (LFa) lie at residues 838 to 846 (VFQDEELLF) and 855 to 861 (DPDVDLF). 2 positions are modified to phosphoserine: S873 and S876. Positions 877–887 (LFGDDEDDDLF) match the LFa 14 motif. Disordered regions lie at residues 906–950 (DYSV…KEPS) and 987–1205 (FPSS…EDED). Residues 916–930 (KHPETIQGIKEKGIW) are compositionally biased toward basic and acidic residues. The segment at 936–1340 (QDSSGLAPFK…DDPLNAFGGQ (405 aa)) is interaction with phospholipids. Over residues 1027 to 1045 (NKSRVKMRGKRRPQTRAAR) the composition is skewed to basic residues. The tract at residues 1028-1046 (KSRVKMRGKRRPQTRAARR) is required for interaction with F-actin-capping protein subunit alpha (CAPZA1 or CAPZA2 or CAPZA3). S1053 and S1086 each carry phosphoserine. Low complexity predominate over residues 1093–1109 (EALAAAAAPWEGGPVPG). The residue at position 1113 (S1113) is a Phosphoserine. 6 consecutive short sequence motifs (LFa) follow at residues 1128 to 1135 (LFDSGDIF), 1170 to 1184 (MFPALGEASSDDDLF), 1200 to 1208 (LLEDEDDLF), 1233 to 1239 (IFEDDIF), 1261 to 1269 (LFDDNIDIF), and 1289 to 1298 (IFDDDMDDIF). Phosphoserine is present on residues S1178 and S1179. The tract at residues 1301–1325 (GIQAKTAKPKSRSAQAAPEPRFEHK) is disordered. The LFa 21 motif lies at 1329–1337 (IFDDPLNAF).

The protein belongs to the FAM21 family. As to quaternary structure, component of the WASH core complex also described as WASH regulatory complex (SHRC) composed of WASHC1, WASHC2, WASHC3, WASHC4 and WASHC5; in the complex interacts (via N-terminus) directly with WASHC1. The WASH core complex associates with the F-actin-capping protein dimer (formed by CAPZA1, CAPZA2 or CAPZA3 and CAPZB) in a transient or substoichiometric manner which was initially described as WASH complex. Interacts with VPS35; mediates the association with the retromer CSC complex. Interacts with FKBP15. Interacts with CCDC93, CCDC22, VPS35L; indicative for an association of the WASH core complex with the CCC and retriever complexes. Directly interacts with TBC1D23.

It localises to the early endosome membrane. It is found in the cell membrane. Acts as a component of the WASH core complex that functions as a nucleation-promoting factor (NPF) at the surface of endosomes, where it recruits and activates the Arp2/3 complex to induce actin polymerization, playing a key role in the fission of tubules that serve as transport intermediates during endosome sorting. Mediates the recruitment of the WASH core complex to endosome membranes via binding to phospholipids and VPS35 of the retromer CSC. Mediates the recruitment of the F-actin-capping protein dimer to the WASH core complex probably promoting localized F-actin polymerization needed for vesicle scission. Via its C-terminus binds various phospholipids, most strongly phosphatidylinositol 4-phosphate (PtdIns-(4)P), phosphatidylinositol 5-phosphate (PtdIns-(5)P) and phosphatidylinositol 3,5-bisphosphate (PtdIns-(3,5)P2). Involved in the endosome-to-plasma membrane trafficking and recycling of SNX27-retromer-dependent cargo proteins, such as GLUT1. Required for the association of DNAJC13, ENTR1, ANKRD50 with retromer CSC subunit VPS35. Required for the endosomal recruitment of CCC and retriever complexes subunits COMMD1 and CCDC93 as well as the retrievere complex subunit VPS35L. In Pongo abelii (Sumatran orangutan), this protein is WASH complex subunit 2.